The sequence spans 1217 residues: MLSVEMISRQNRCHYVYKGGNMMRRILHIVLITALMFLNVMYTFEAVKAAEPQQPISIEKAIQQKEGQALVEGYAVGQAVSPQHYKLTSPFSNDYNVALADRKNKTSPEHILPVQIPSAFRSQFGLQTNPLLLGKKITVQGKLENYFNTTGLKNVQSMNVTDDTKTPPAEQQVTINEARGRLNEEVTIKGIITADQNAIGGGKLSTFLQDETGGINIYSPSPEQFPELKEGMDVTVTGKITSYQGLKEIVPNSSGIKINQSNQSLPAPKHLTINELINGSLGDQYEGRLVKLTAFVSSIPSSPAGGGYNVTMIDDDHHAMTLRVMNETGVINELDEGKWYEFTGVLSRYQTFQLLPRKSADLKLLEEQPAPPSAEGEYEGIVDRVVDGDTIHLKSPVLGTTKIRFVNVDAPETYHTPKNDADENQLRFGKKASDYLKTVLSPGDKITVKVGSEAKDSYGRLLGQVITESGSNVNLELVKNGYAPTYFIWPVDNEEDYQQFQAAVAAAKKDQKGIWNENDPLMEMPFEFRAREQGKGLTRYVGDSSNKTYVQPADWKKIAVENRIFFASASEAESAGYKKRQTAPQEHVPLRILSMNDLHGKIDQQYELDLDGNGTVDGTFGRMDYAAAYLKEKKAEKKNSLIVHAGDMIGGSSPVSSLLQDEPTVELMEDIGFDVGTVGNHEFDEGTDELLRILNGGDHPKGTSGYDGQNFPLVCANCKMKSTGEPFLPAYDIINVEGVPVAFIGVVTQSAAGMVMPEGIKNIEFTDEATAVNKAAEELKKKGVKAIAVLAHMSAEQNGNAITGESADLANKTDSEIDVIFAAHNHQVVNGEVNGKLIVQAFEYGKAIGVVDVEIDKTTKDIVKKSAEIVYVDQSKIEPDVSASAILKKYETIAEPIISEVVGEAAVDMEGGYSNDGDTPLGNLIADGMRAAMKTDFALMNGGGIREALKKGPITWGDLYNIQPFGNVLTKLEIKGKDLREIINAQISPVFGPDYSISGFTYTWDKETGKAVDMKMADGTEIQPDATYTLTVNNFMATATGAKYQPIGLLGKNPVTGPEDLEATVEYVKSFDEPIAYTKEGRIKLAEASDIEDPVTEDPITEEPGDDPGTEDPIKEDPRPGEDLPDIKETPGTAPVHQLPPSAISRFNEIPINNTKTADTANSISTLPLQTETAESGSDHQLPDTSAGYYNFMVIGAAVTLSGTYLYVRRKRSASRT.

The first 46 residues, 1–46, serve as a signal peptide directing secretion; it reads MLSVEMISRQNRCHYVYKGGNMMRRILHIVLITALMFLNVMYTFEA. In terms of domain architecture, TNase-like spans 376-517; sequence GEYEGIVDRV…KKDQKGIWNE (142 aa). Catalysis depends on residues Arg404, Glu412, and Arg460. Residues 590-828 form a phosphoesterase region; sequence LRILSMNDLH…VIFAAHNHQV (239 aa). A divalent metal cation is bound by residues Asp597, His599, Asp647, Asn680, His792, and His824. Residues 829–1085 form a 5'-nucleotidase region; sequence VNGEVNGKLI…AYTKEGRIKL (257 aa). Residues Phe965 and 1035–1042 contribute to the substrate site; that span reads FMATATGA. The tract at residues 1087–1142 is disordered; that stretch reads EASDIEDPVTEDPITEEPGDDPGTEDPIKEDPRPGEDLPDIKETPGTAPVHQLPPS. The span at 1089–1110 shows a compositional bias: acidic residues; that stretch reads SDIEDPVTEDPITEEPGDDPGT. Basic and acidic residues predominate over residues 1112–1129; it reads DPIKEDPRPGEDLPDIKE. Residues 1182–1186 carry the LPXTG sorting signal motif; sequence LPDTS. The residue at position 1185 (Thr1185) is a Pentaglycyl murein peptidoglycan amidated threonine. Positions 1186-1217 are cleaved as a propeptide — removed by sortase; sequence SAGYYNFMVIGAAVTLSGTYLYVRRKRSASRT.

The protein in the C-terminal section; belongs to the 5'-nucleotidase family. Ca(2+) is required as a cofactor. Mn(2+) serves as cofactor.

Its subcellular location is the secreted. It localises to the cell wall. Requires a minimum of 0.1 mM of calcium for a significant activity. Maximal activity was observed with concentrations of calcium between 1 to 5 mM. Is 10-fold less active with the corresponding concentrations of manganese. Inhibited by NaCl at concentrations of 100 mM and higher. Functionally, sugar-nonspecific endonuclease that yields nucleotide 3'-monophosphate products. No 5'-nucleotidase activity was detected, using 5'-AMP as the substrate, in the presence of diverse divalent metals and with various pH values. The sequence is that of Endonuclease YhcR (yhcR) from Bacillus subtilis (strain 168).